Here is a 469-residue protein sequence, read N- to C-terminus: 3-isopropylmalate dehydratase large subunit (469 aa).

[4Fe-4S] cluster-binding residues include cysteine 350, cysteine 410, and cysteine 413.

The protein belongs to the aconitase/IPM isomerase family. LeuC type 1 subfamily. As to quaternary structure, heterodimer of LeuC and LeuD. Requires [4Fe-4S] cluster as cofactor.

The enzyme catalyses (2R,3S)-3-isopropylmalate = (2S)-2-isopropylmalate. It functions in the pathway amino-acid biosynthesis; L-leucine biosynthesis; L-leucine from 3-methyl-2-oxobutanoate: step 2/4. Catalyzes the isomerization between 2-isopropylmalate and 3-isopropylmalate, via the formation of 2-isopropylmaleate. The sequence is that of 3-isopropylmalate dehydratase large subunit from Chelativorans sp. (strain BNC1).